A 248-amino-acid polypeptide reads, in one-letter code: tRNA (guanine-N(1)-)-methyltransferase (248 aa).

S-adenosyl-L-methionine is bound by residues Gly113 and 133–138 (IGDYVL).

It belongs to the RNA methyltransferase TrmD family. Homodimer.

The protein localises to the cytoplasm. The catalysed reaction is guanosine(37) in tRNA + S-adenosyl-L-methionine = N(1)-methylguanosine(37) in tRNA + S-adenosyl-L-homocysteine + H(+). In terms of biological role, specifically methylates guanosine-37 in various tRNAs. The sequence is that of tRNA (guanine-N(1)-)-methyltransferase from Shewanella frigidimarina (strain NCIMB 400).